A 351-amino-acid chain; its full sequence is MSSLLIDLKGKELEQEEVELLSHPLVAGLILFTRNFENREQIQELIRSVRQRVKKPLLITVDQEGGRVQRFRDGFTMLPSMQAFQETLSATEQVSFAKEAGWQMAAEMIALDIDLSFAPVLDLGHECRAIGDRSFSSDVKSAVNLATAFIDGMHQAGMASTGKHFPGHGHVLADSHLETPYDDRTKEEIFSGDLQPFQQLISQNKLDAIMPAHVIYSQCDSQPASGSKYWLKEILRKKLNFQGTIFSDDLGMKGAGVMGNFVERSKKALNAGCDLLLLCNEREGVIQVLDNLKLTENQPHFMARQARLQSLFKRRVINWNDLISDQRWRLNYQKLADIQSRWLDIQAAKND.

Substrate-binding positions include Asp-62, Arg-70, Arg-133, and 163–164; that span reads KH. His-176 functions as the Proton donor/acceptor in the catalytic mechanism. Asp-248 (nucleophile) is an active-site residue.

This sequence belongs to the glycosyl hydrolase 3 family. NagZ subfamily. As to quaternary structure, monomer.

The protein localises to the cytoplasm. It catalyses the reaction Hydrolysis of terminal non-reducing N-acetyl-D-hexosamine residues in N-acetyl-beta-D-hexosaminides.. It functions in the pathway cell wall biogenesis; peptidoglycan recycling. In terms of biological role, plays a role in peptidoglycan recycling by cleaving the terminal beta-1,4-linked N-acetylglucosamine (GlcNAc) from peptide-linked peptidoglycan fragments, giving rise to free GlcNAc, anhydro-N-acetylmuramic acid and anhydro-N-acetylmuramic acid-linked peptides. In Haemophilus influenzae (strain ATCC 51907 / DSM 11121 / KW20 / Rd), this protein is Beta-hexosaminidase.